Consider the following 125-residue polypeptide: MGCVLLFLLLVCVPVVLPQGLRCLFCPVTSLNSSCAPVVTECPVQELCYTADGRFGRSSVLFRKGCMLRADCSRSRHQMIRGNNISFSFSCCGGHYCNSQPRAEPGGRLLLLLLPAAALTAAGAL.

A signal peptide spans 1–18 (MGCVLLFLLLVCVPVVLP). Intrachain disulfides connect cysteine 23-cysteine 48, cysteine 26-cysteine 35, cysteine 42-cysteine 66, cysteine 72-cysteine 91, and cysteine 92-cysteine 97. Residues 23–98 (CLFCPVTSLN…FSCCGGHYCN (76 aa)) enclose the UPAR/Ly6 domain. Residue asparagine 32 is glycosylated (N-linked (GlcNAc...) asparagine). A glycan (N-linked (GlcNAc...) asparagine) is linked at asparagine 84. Residue asparagine 98 is the site of GPI-anchor amidated asparagine attachment. Positions 99-125 (SQPRAEPGGRLLLLLLPAAALTAAGAL) are cleaved as a propeptide — removed in mature form.

This sequence belongs to the SPACA4/bouncer family. As to quaternary structure, interacts with spermatocyte complex composed of izumo1, spaca6 and tmem81. N-glycosylated. As to expression, highly expressed in oocytes. Not expressed in testis.

The protein localises to the cell membrane. In terms of biological role, oocyte-expressed fertilization factor that mediates sperm-egg binding and is essential for sperm entry into the egg. Necessary and sufficient to mediate species-specific gamete recognition and fertilization, which is essential for vertebrate species performing external fertilization. External fertilization cannot guarantee that only conspecific sperm reaches the egg by precopulatory mate choice: proteins such as Bouncer can therefore support the selection of conspecific sperm. This is Protein Bouncer from Danio rerio (Zebrafish).